We begin with the raw amino-acid sequence, 116 residues long: Putative superoxide reductase (116 aa).

Residues H20, H46, H52, C101, and H104 each contribute to the Fe cation site.

This sequence belongs to the desulfoferrodoxin family. The cofactor is Fe cation.

The catalysed reaction is reduced [rubredoxin] + superoxide + 2 H(+) = oxidized [rubredoxin] + H2O2. Its function is as follows. Uses electrons from reduced NADP, by way of rubredoxin and an oxidoreductase, to catalyze the reduction of superoxide to hydrogen peroxide. In Methanocaldococcus jannaschii (strain ATCC 43067 / DSM 2661 / JAL-1 / JCM 10045 / NBRC 100440) (Methanococcus jannaschii), this protein is Putative superoxide reductase.